We begin with the raw amino-acid sequence, 319 residues long: Phospho-N-acetylmuramoyl-pentapeptide-transferase (319 aa).

10 consecutive transmembrane segments (helical) span residues 5–25, 51–71, 79–99, 116–136, 149–169, 172–192, 197–217, 224–244, 252–272, and 299–319; these read LIPF…FIGF, TMGG…VLIW, AWIL…DDGI, LGQI…HFAF, SFLF…AVNL, GLDG…AWIA, NWVI…FFIF, IFMG…VSIF, LLIG…VISF, and VDIV…IIWG.

It belongs to the glycosyltransferase 4 family. MraY subfamily. Requires Mg(2+) as cofactor.

It localises to the cell membrane. The catalysed reaction is UDP-N-acetyl-alpha-D-muramoyl-L-alanyl-gamma-D-glutamyl-L-lysyl-D-alanyl-D-alanine + di-trans,octa-cis-undecaprenyl phosphate = Mur2Ac(oyl-L-Ala-gamma-D-Glu-L-Lys-D-Ala-D-Ala)-di-trans,octa-cis-undecaprenyl diphosphate + UMP. Its pathway is cell wall biogenesis; peptidoglycan biosynthesis. Catalyzes the initial step of the lipid cycle reactions in the biosynthesis of the cell wall peptidoglycan: transfers peptidoglycan precursor phospho-MurNAc-pentapeptide from UDP-MurNAc-pentapeptide onto the lipid carrier undecaprenyl phosphate, yielding undecaprenyl-pyrophosphoryl-MurNAc-pentapeptide, known as lipid I. This chain is Phospho-N-acetylmuramoyl-pentapeptide-transferase, found in Lactobacillus johnsonii (strain CNCM I-12250 / La1 / NCC 533).